The sequence spans 385 residues: MDMKSGHSSPVMTDSPPISNSRLTIRQNRLPYSSAAATAISQNNNLLLTVPRKKTGILDDVKSNGWLDAMKSSSPPPTILNKDNLSNDATDMTYREWMQLKYPSALTSFEKIMSFAKGKRIALFLDYDGTLSPIVEEPDCAYMSSAMRSAVQNVAKYFPTAIISGRSRDKVYEFVNLSELYYAGSHGMDIMSPAGESLNHEHSRTVSVYEQGKDVNLFQPASEFLPMIDKVLCSLIESTKDIKGVKVEDNKFCISVHYRNVEEKNWTLVAQCVDDVIRTYPKLRLTHGRKVLEIRPVIDWDKGKAVTFLLESLGLNNCEDVLPIYVGDDRTDEDAFKVLRDGPNHGYGILVSAVPKDSNAFYSLRDPSEVMEFLKSLVTWKRSMG.

Residues methionine 1–serine 21 are disordered.

Belongs to the trehalose phosphatase family. A divalent metal cation is required as a cofactor. In terms of tissue distribution, expressed in flowers.

The catalysed reaction is alpha,alpha-trehalose 6-phosphate + H2O = alpha,alpha-trehalose + phosphate. The protein operates within glycan biosynthesis; trehalose biosynthesis. Its function is as follows. Removes the phosphate from trehalose 6-phosphate to produce free trehalose. Trehalose accumulation in plant may improve abiotic stress tolerance. This Arabidopsis thaliana (Mouse-ear cress) protein is Trehalose-phosphate phosphatase A (TPPA).